A 482-amino-acid polypeptide reads, in one-letter code: Arginine/ornithine antiporter (482 aa).

Residues 1-10 (MSQESSQKLR) lie on the Cytoplasmic side of the membrane. Residues 11–31 (LGALTALVVGSMIGGGIFSLP) traverse the membrane as a helical segment. Residues 32–40 (QNMAASADV) are Periplasmic-facing. The helical transmembrane segment at 41-61 (GAVLIGWAITAVGMLTLAFVF) threads the bilayer. Residues 62 to 100 (QTLANRKPELDGGVYAYAKAGFGDYMGFSSAWGYWISAW) are Cytoplasmic-facing. The chain crosses the membrane as a helical span at residues 101–121 (LGNVGYFVLLFSTLGYFFPIF). Residues 122 to 124 (GKG) are Periplasmic-facing. Residues 125 to 145 (DTVAAIVCASVLLWALHFLVL) traverse the membrane as a helical segment. The Cytoplasmic segment spans residues 146-156 (RGIKEAAFINT). Residues 157–177 (VTTVAKVVPLFLFILICLFAF) traverse the membrane as a helical segment. Residues 178–202 (KLDIFTADIWGKSNPDLGSVMNQVR) lie on the Periplasmic side of the membrane. The chain crosses the membrane as a helical span at residues 203–223 (NMMLVTVWVFIGIEGASIFSS). Residues 224 to 235 (RAEKRSDVGKAT) are Cytoplasmic-facing. Residues 236–256 (VIGFITVLLLLVLVNVLSMGV) form a helical membrane-spanning segment. The Periplasmic portion of the chain corresponds to 257 to 283 (MTQPELAKLQNPSMALVLEHVVGHWGA). The helical transmembrane segment at 284 to 304 (VLISVGLLISLLGALLSWVLL) threads the bilayer. Residues 305–333 (CAEIMFAAAKDHTMPEFLRRENANQVPAN) lie on the Cytoplasmic side of the membrane. The helical transmembrane segment at 334 to 354 (ALWLTNICVQVFLVVVFFTSG) threads the bilayer. The Periplasmic segment spans residues 355–365 (DPDGMDPYTKM). Residues 366-386 (LLLATSMILIPYFWSAAYGLL) form a helical membrane-spanning segment. Residues 387-403 (LTLKGETYENDARERSK) are Cytoplasmic-facing. Residues 404-424 (DLVIAGIAVAYAVWLLYAGGL) form a helical membrane-spanning segment. Lysine 425 is a topological domain (periplasmic). A helical membrane pass occupies residues 426 to 446 (YLLLSALLYAPGAILFAKAKH). At 447–458 (EVGQPIFTGIEK) the chain is on the cytoplasmic side. A helical membrane pass occupies residues 459–479 (LIFAAVVIGALVAAYGLYDGF). Residues 480-482 (LTL) lie on the Periplasmic side of the membrane.

Belongs to the amino acid-polyamine-organocation (APC) superfamily. Basic amino acid/polyamine antiporter (APA) (TC 2.A.3.2) family.

It localises to the cell inner membrane. It carries out the reaction L-ornithine(in) + L-arginine(out) = L-ornithine(out) + L-arginine(in). Functionally, catalyzes electroneutral exchange between arginine and ornithine to allow high-efficiency energy conversion in the arginine deiminase pathway. Also mediates the proton motive force-driven uptake of arginine and ornithine, but the exchange is several orders of magnitude faster than the proton motive force-driven transport. This Pseudomonas aeruginosa (strain ATCC 15692 / DSM 22644 / CIP 104116 / JCM 14847 / LMG 12228 / 1C / PRS 101 / PAO1) protein is Arginine/ornithine antiporter.